Reading from the N-terminus, the 1068-residue chain is MAPRKRSHHGLGFLCCFGGSDIPEINLRDNHPLQFMEFSSPIPNAEELNIRFAELVDELDLTDKNREAMFALPPEKKWQIYCSKKKEQEDPNKLATSWPDYYIDRINSMAAMQSLYAFDEEETEMRNQVVEDLKTALRTQPMRFVTRFIELEGLTCLLNFLRSMDHATCESRIHTSLIGCIKALMNNSQGRAHVLAQPEAISTIAQSLRTENSKTKVAVLEILGAVCLVPGGHKKVLQAMLHYQVYAAERTRFQTLLNELDRSLGRYRDEVNLKTAIMSFINAVLNAGAGEDNLEFRLHLRYEFLMLGIQPVIDKLRQHENAILDKHLDFFEMVRNEDDLELARRFDMVHIDTKSASQMFELIHKKLKYTEAYPCLLSVLHHCLQMPYKRNGGYFQQWQLLDRILQQIVLQDERGVDPDLAPLENFNVKNIVNMLINENEVKQWRDQAEKFRKEHMELVSRLERKERECETKTLEKEEMMRTLNKMKDKLARESQELRQARGQVAELVAQLSELSTGPVSSPPPPGGPLTLSSSMTTNDLPPPPPPLPFACCPPPPPPPLPPGGPPTPPGAPPCLGMGLPLPQDPYPSSDVPLRKKRVPQPSHPLKSFNWVKLNEERVPGTVWNEIDDMQVFRILDLEDFEKMFSAYQRHQKELGSTEDIYLASRKVKELSVIDGRRAQNCIILLSKLKLSNEEIRQAILKMDEQEDLAKDMLEQLLKFIPEKSDIDLLEEHKHEIERMARADRFLYEMSRIDHYQQRLQALFFKKKFQERLAEAKPKVEAILLASRELVRSKRLRQMLEVILAIGNFMNKGQRGGAYGFRVASLNKIADTKSSIDRNISLLHYLIMILEKHFPDILNMPSELQHLPEAAKVNLAELEKEVGNLRRGLRAVEVELEYQRRQVREPSDKFVPVMSDFITVSSFSFSELEDQLNEARDKFAKALMHFGEHDSKMQPDEFFGIFDTFLQAFSEARQDLEAMRRRKEEEERRARMEAMLKEQRERERWQRQRKVLAAGSSLEEGGEFDDLVSALRSGEVFDKDLCKLKRSRKRSGSQALEVTRERAINRLNY.

Positions 40 to 416 (SPIPNAEELN…QIVLQDERGV (377 aa)) constitute a GBD/FH3 domain. Positions 434–516 (MLINENEVKQ…LVAQLSELST (83 aa)) form a coiled coil. A disordered region spans residues 514–586 (LSTGPVSSPP…MGLPLPQDPY (73 aa)). The 77-residue stretch at 518 to 594 (PVSSPPPPGG…PYPSSDVPLR (77 aa)) folds into the FH1 domain. Residues 540 to 572 (LPPPPPPLPFACCPPPPPPPLPPGGPPTPPGAP) are compositionally biased toward pro residues. One can recognise an FH2 domain in the interval 595–994 (KKRVPQPSHP…EERRARMEAM (400 aa)). S1015 carries the phosphoserine modification. Residues 1016–1048 (SLEEGGEFDDLVSALRSGEVFDKDLCKLKRSRK) enclose the DAD domain.

The protein belongs to the formin homology family. As to quaternary structure, interacts with DVL3. Interacts with INF2. As to expression, expressed in most tissues examined. Expressed in kidney glomeruli.

In terms of biological role, key regulator of the Wnt signaling pathway, which is required for various processes during development, such as dorsal patterning, determination of left/right symmetry or myelination in the central nervous system. Acts downstream of Wnt ligands and upstream of beta-catenin (CTNNB1). Required for canonical Wnt signaling pathway during patterning in the dorsal spinal cord by promoting the aggregation of Disheveled (Dvl) complexes, thereby clustering and formation of Wnt receptor signalosomes and potentiating Wnt activity. During dorsal patterning of the spinal cord, inhibits oligodendrocytes differentiation via interaction with PIP5K1A. Also regulates non-canonical Wnt signaling pathway. Acts downstream of PITX2 in the developing gut and is required for left/right asymmetry within dorsal mesentery: affects mesenchymal condensation by lengthening cadherin-based junctions through WNT5A and non-canonical Wnt signaling, inducing polarized condensation in the left dorsal mesentery necessary to initiate gut rotation. Together with DAAM1, required for myocardial maturation and sarcomere assembly. Is a regulator of actin nucleation and elongation, filopodia formation and podocyte migration. This chain is Disheveled-associated activator of morphogenesis 2, found in Homo sapiens (Human).